A 146-amino-acid chain; its full sequence is VEWTDAEKSTISAVWGKVNIDEIGPLALARVLIVYPWTQRYFGSFGNVSTPAAIMGNPKVAAHGKVVCGALDKAVKNMGNILATYKSLSETHANKLFVDPDNFRVLADVLTIVIAAKFGASFTPEIQATWQKFMKVVVAAMGSRYF.

Residues 2-146 enclose the Globin domain; sequence EWTDAEKSTI…VVAAMGSRYF (145 aa). Positions 63 and 92 each coordinate heme b.

It belongs to the globin family. Heterotetramer of two alpha chains and two beta chains. In terms of tissue distribution, red blood cells.

Its function is as follows. Involved in oxygen transport from gills to the various peripheral tissues. The sequence is that of Hemoglobin subunit beta-1 (hbb1) from Oncorhynchus mykiss (Rainbow trout).